The following is a 247-amino-acid chain: Chloride intracellular channel protein 2 (247 aa).

An N-terminal region spans residues 1–94 (MSGLRPGTQV…KIEEFLEQTL (94 aa)). The interval 1–96 (MSGLRPGTQV…EEFLEQTLAP (96 aa)) is required for insertion into the membrane. Glutamate 25 is a glutathione binding site. Positions 30–33 (CPFC) match the G-site motif. Cysteine 30 and cysteine 33 are disulfide-bonded. A helical transmembrane segment spans residues 32–52 (FCQRLFMILWLKGVKFNVTTV). One can recognise a GST C-terminal domain in the interval 76–239 (NKELKTDFIK…PEDKEIENTY (164 aa)). The interval 95 to 106 (APPRYPHLSPKY) is joint loop. The interval 107-247 (KESFDVGCNL…TYANVAKQKS (141 aa)) is C-terminal. Residues 151–171 (NTPLLDEIDPDSAEEPPVSRR) form a foot loop region. Position 227 (histidine 227) interacts with glutathione.

This sequence belongs to the chloride channel CLIC family. In terms of assembly, monomer. Interacts with TRAPPC2 and RYR2. Expressed in adult and fetal brain, heart, skeletal muscle, liver, lung, and spleen. Detected in adult stomach and testis. Expressed in fetal thymus and kidney.

It localises to the cytoplasm. The protein localises to the membrane. It carries out the reaction chloride(in) = chloride(out). The catalysed reaction is tert-butyl hydroperoxide + 2 glutathione = tert-butanol + glutathione disulfide + H2O. The enzyme catalyses cumene hydroperoxide + 2 glutathione = 2-phenylpropan-2-ol + glutathione disulfide + H2O. The channel conductance is regulated by pH. Functionally, in the soluble state, catalyzes glutaredoxin-like thiol disulfide exchange reactions with reduced glutathione as electron donor. Displays weak glutathione peroxidase activity. Can insert into membranes and form chloride ion channels. Membrane insertion seems to be redox-regulated and may occur only under oxidizing conditions. Modulates the activity of RYR2 and inhibits calcium influx. The polypeptide is Chloride intracellular channel protein 2 (Homo sapiens (Human)).